We begin with the raw amino-acid sequence, 107 residues long: Quaternary ammonium compound-resistance protein QacC (107 aa).

The next 3 membrane-spanning stretches (helical) occupy residues F26 to L46, I57 to I77, and L84 to G104.

The protein belongs to the drug/metabolite transporter (DMT) superfamily. Small multidrug resistance (SMR) (TC 2.A.7.1) family.

The protein resides in the cell membrane. Its function is as follows. Multidrug exporter. Is implicated for the resistance to bacteriocidal quaternary ammonium compounds. The sequence is that of Quaternary ammonium compound-resistance protein QacC from Staphylococcus sp. (strain ST827).